The chain runs to 479 residues: Something about silencing protein 10 (479 aa).

Basic residues predominate over residues 1–10 (MVGRSRRRGA). 2 disordered regions span residues 1 to 45 (MVGR…SYYQ) and 62 to 166 (KGWN…EEAQ). Residue R8 is modified to Omega-N-methylarginine. Over residues 11–21 (AKWAAVRAKAG) the composition is skewed to low complexity. A Phosphoserine modification is found at S37. Positions 69-111 (SGDEEDGEEEEEEVLALDMDDEDDEDGGNAGEEEEEENADDDG) are enriched in acidic residues. Residue K144 is modified to N6-acetyllysine; alternate. K144 is covalently cross-linked (Glycyl lysine isopeptide (Lys-Gly) (interchain with G-Cter in SUMO2); alternate). At S150 the chain carries Phosphoserine. Over residues 153 to 165 (EAEEEEREEEEEA) the composition is skewed to acidic residues. T362 is modified (phosphothreonine). 2 positions are modified to phosphoserine: S365 and S368. R385 is subject to Citrulline. Residues 419-466 (RGLTPRRKKIDRNPRVKHREKFRRAKIRRRGQVREVRKEEQRYSGELS) are disordered. The span at 422-449 (TPRRKKIDRNPRVKHREKFRRAKIRRRG) shows a compositional bias: basic residues. The segment covering 450 to 461 (QVREVRKEEQRY) has biased composition (basic and acidic residues).

The protein belongs to the SAS10 family. Part of the small subunit (SSU) processome, composed of more than 70 proteins and the RNA chaperone small nucleolar RNA (snoRNA) U3. Post-translationally, citrullinated by PADI4.

The protein resides in the nucleus. The protein localises to the nucleolus. In terms of biological role, essential for gene silencing: has a role in the structure of silenced chromatin. Plays a role in the developing brain. Part of the small subunit (SSU) processome, first precursor of the small eukaryotic ribosomal subunit. During the assembly of the SSU processome in the nucleolus, many ribosome biogenesis factors, an RNA chaperone and ribosomal proteins associate with the nascent pre-rRNA and work in concert to generate RNA folding, modifications, rearrangements and cleavage as well as targeted degradation of pre-ribosomal RNA by the RNA exosome. This is Something about silencing protein 10 from Homo sapiens (Human).